Consider the following 529-residue polypeptide: Na(+)/H(+) antiporter NhaB (529 aa).

12 consecutive transmembrane segments (helical) span residues 13 to 33 (FLGK…IINP), 34 to 54 (IVFF…EFIF), 90 to 110 (LVAN…IYFM), 113 to 133 (LLLF…ILSL), 149 to 166 (LTVI…YSIY), 205 to 225 (LLMH…VGEP), 241 to 261 (FLIR…LTCF), 306 to 326 (GLIA…VGLI), 327 to 347 (GLSV…HSLG), 351 to 371 (EEAL…AVII), 451 to 471 (ATPN…APLI), and 479 to 499 (VIMA…GIVF).

This sequence belongs to the NhaB Na(+)/H(+) (TC 2.A.34) antiporter family.

It localises to the cell inner membrane. It catalyses the reaction 2 Na(+)(in) + 3 H(+)(out) = 2 Na(+)(out) + 3 H(+)(in). Na(+)/H(+) antiporter that extrudes sodium in exchange for external protons. This Vibrio vulnificus (strain YJ016) protein is Na(+)/H(+) antiporter NhaB.